The sequence spans 81 residues: Protein Vpu (81 aa).

The Extracellular portion of the chain corresponds to 1–7; the sequence is MQPSQII. Residues 8–28 traverse the membrane as a helical segment; that stretch reads AIAALVVAAIIAIVVWTIVFI. Topologically, residues 29–81 are cytoplasmic; it reads EYRRIKRQRKIDCIIDRIRERAEDSGNESEGDREELSKLVEMGHHAPWDIDDL. A phosphoserine; by host CK2 mark is found at Ser-53 and Ser-57.

The protein belongs to the HIV-1 VPU protein family. In terms of assembly, homopentamer. Interacts with host CD4 and BRTC; these interactions induce proteasomal degradation of CD4. Interacts with host BST2; this interaction leads to the degradation of host BST2. Interacts with host FBXW11. Interacts with host AP1M1; this interaction plays a role in the mistrafficking and subsequent degradation of host BST2. Interacts with host RANBP2; this interaction allows Vpu to down-regulate host BLM sumoylation. In terms of processing, phosphorylated by host CK2. This phosphorylation is necessary for interaction with human BTRC and degradation of CD4.

It is found in the host membrane. Ion channel activity is inhibited by hexamethylene amiloride in vitro. Its function is as follows. Enhances virion budding by targeting host CD4 and Tetherin/BST2 to proteasome degradation. Degradation of CD4 prevents any unwanted premature interactions between viral Env and its host receptor CD4 in the endoplasmic reticulum. Degradation of antiretroviral protein Tetherin/BST2 is important for virion budding, as BST2 tethers new viral particles to the host cell membrane. Mechanistically, Vpu bridges either CD4 or BST2 to BTRC, a substrate recognition subunit of the Skp1/Cullin/F-box protein E3 ubiquitin ligase, induces their ubiquitination and subsequent proteasomal degradation. The alteration of the E3 ligase specificity by Vpu seems to promote the degradation of host IKBKB, leading to NF-kappa-B down-regulation and subsequent apoptosis. Acts as a viroporin that forms an oligomeric ion channel in membranes. Modulates the host DNA repair mechanisms to promote degradation of nuclear viral cDNA in cells that are already productively infected in order to suppress immune sensing and proviral hyper-integration (superinfection). Manipulates PML-NBs and modulates SUMOylation of host BLM protein thereby enhancing its DNA-end processing activity toward viral unintegrated linear DNA. Also inhibits RAD52-mediated homologous repair of viral cDNA, preventing the generation of dead-end circular forms of single copies of the long terminal repeat and permitting sustained nucleolytic attack. The protein is Protein Vpu of Homo sapiens (Human).